The primary structure comprises 514 residues: MEISWGRAMWRNFLGQSPDWYKLALLVFLIINPLTFFTNSFVAGWLLVAEFIFTLAMALKCYPLLPGGLLAIEAVVIGMTSAAHVREEVAANLEVLLLLMFMVAGIYFMKQLLLFIFTRLLLSIRSKMVLSLAFCVAAAFLSAFLDALTVVAVVISVAVGFYGIYHRVASSRGEENDMLDDSHIDQHYKTVLEQFRGFLRSLMMHAGVGTALGGVMTMVGEPQNLIIAKAAGWHFGDFFLRMSPVTVPVLVCGLLTCMLVEKMRWFGYGETLPEKVRNVLQQFDDQSRKQRTRQDKIKLIVQAIIGVWLVTALALHLAEVGLIGLSVIILATALTGVTDEHAIGKAFTESLPFTALLTVFFSIVAVIIDQHLFAPIIQFVLQASEHAQLTLFYLFNGLLSSISDNVFVGTIYINEAKAAMENGAISLKQFELLAVAINTGTNLPSVATPNGQAAFLFLLTSALAPLIRLSYGRMVWMALPYTIILTLVGLLCVEFTLAPVNEWMTQAGWLATLS.

The next 12 helical transmembrane spans lie at 23–43 (LALLVFLIINPLTFFTNSFVA), 52–72 (IFTLAMALKCYPLLPGGLLAI), 97–117 (LLLMFMVAGIYFMKQLLLFIF), 120–140 (LLLSIRSKMVLSLAFCVAAAF), 144–164 (FLDALTVVAVVISVAVGFYGI), 202–222 (LMMHAGVGTALGGVMTMVGEP), 238–258 (FFLRMSPVTVPVLVCGLLTCM), 303–323 (AIIGVWLVTALALHLAEVGLI), 357–377 (LTVFFSIVAVIIDQHLFAPII), 391–411 (LFYLFNGLLSSISDNVFVGTI), 447–467 (ATPNGQAAFLFLLTSALAPLI), and 475–495 (VWMALPYTIILTLVGLLCVEF).

It belongs to the NhaB Na(+)/H(+) (TC 2.A.34) antiporter family.

The protein resides in the cell inner membrane. It carries out the reaction 2 Na(+)(in) + 3 H(+)(out) = 2 Na(+)(out) + 3 H(+)(in). In terms of biological role, na(+)/H(+) antiporter that extrudes sodium in exchange for external protons. In Salmonella arizonae (strain ATCC BAA-731 / CDC346-86 / RSK2980), this protein is Na(+)/H(+) antiporter NhaB.